The chain runs to 285 residues: 2-dehydro-3-deoxyphosphooctonate aldolase (285 aa).

It belongs to the KdsA family.

The protein resides in the cytoplasm. The catalysed reaction is D-arabinose 5-phosphate + phosphoenolpyruvate + H2O = 3-deoxy-alpha-D-manno-2-octulosonate-8-phosphate + phosphate. The protein operates within carbohydrate biosynthesis; 3-deoxy-D-manno-octulosonate biosynthesis; 3-deoxy-D-manno-octulosonate from D-ribulose 5-phosphate: step 2/3. Its pathway is bacterial outer membrane biogenesis; lipopolysaccharide biosynthesis. This Verminephrobacter eiseniae (strain EF01-2) protein is 2-dehydro-3-deoxyphosphooctonate aldolase.